Reading from the N-terminus, the 859-residue chain is Envelope glycoprotein (859 aa).

Positions 1-6 are excised as a propeptide; sequence MVSIAF. At 7–614 the chain is on the extracellular side; the sequence is YGGIPGGIST…KDLWSHIGNW (608 aa). N-linked (GlcNAc...) asparagine; by host glycosylation occurs at Asn40. Residues 47 to 66 form a disordered region; the sequence is AESKEARDQEMNLKEESKEE. Residues 48 to 66 are compositionally biased toward basic and acidic residues; the sequence is ESKEARDQEMNLKEESKEE. N-linked (GlcNAc...) asparagine; by host glycosylation is found at Asn112, Asn141, Asn148, Asn186, Asn214, Asn233, Asn244, Asn340, Asn368, Asn399, Asn406, and Asn411. Residues 446–466 form a fusion peptide region; that stretch reads FGISAIVAAIVAATAIAASAT. Asn483 and Asn490 each carry an N-linked (GlcNAc...) asparagine; by host glycan. An immunosuppression region spans residues 498-513; sequence LIERQIKILYAMILQT. N-linked (GlcNAc...) asparagine; by host glycosylation is found at Asn550 and Asn557. Coiled-coil stretches lie at residues 576–624 and 663–699; these read ILTT…SIIK and KKFHHKHASREDTWDQAQHNIHLAGVTGGSGDKYYKQ. A helical transmembrane segment spans residues 615–635; the sequence is IPGLGASIIKYIVMFLLIYLL. Topologically, residues 636–859 are cytoplasmic; that stretch reads LTSSPKILRA…TSHVSMPQYV (224 aa).

As to quaternary structure, the mature envelope protein (Env) consists of a trimer of SU-TM heterodimers attached by noncovalent interactions or by a labile interchain disulfide bond. In terms of processing, specific enzymatic cleavages in vivo yield mature proteins. Envelope glycoproteins are synthesized as an inactive precursor that is N-glycosylated and processed likely by host cell furin or by a furin-like protease in the Golgi to yield the mature SU and TM proteins. The cleavage site between SU and TM requires the minimal sequence [KR]-X-[KR]-R.

The protein localises to the virion membrane. It localises to the host cell membrane. Functionally, the surface protein (SU) attaches the virus to the host cell by binding to its receptor. This interaction triggers the refolding of the transmembrane protein (TM) and is thought to activate its fusogenic potential by unmasking its fusion peptide. Fusion occurs at the host cell plasma membrane. The transmembrane protein (TM) acts as a class I viral fusion protein. Under the current model, the protein has at least 3 conformational states: pre-fusion native state, pre-hairpin intermediate state, and post-fusion hairpin state. During viral and target cell membrane fusion, the coiled coil regions (heptad repeats) assume a trimer-of-hairpins structure, positioning the fusion peptide in close proximity to the C-terminal region of the ectodomain. The formation of this structure appears to drive apposition and subsequent fusion of viral and target cell membranes. Membranes fusion leads to delivery of the nucleocapsid into the cytoplasm. The polypeptide is Envelope glycoprotein (env) (Equus asinus (Donkey)).